A 446-amino-acid polypeptide reads, in one-letter code: MGKFFGTDGVRGVANEGLTPELAFKLGRFGGYVLTKDSERPRILIGRDTRVSGHMLEGALLAGLLSIGAEVMRLGVISTPGVAYLTKATSAQAGVMISASHNPVEDNGIKFFGPDGFKLTDAQENEIESLMEGEDNLPRPTGADIGVVNDYFEGGQKYLSYLKDTIDNDFEGIHIAIDCANGATSSLATHLFADLEADIYSIGSSPDGLNINDGFGSTHPEKLQEFVVEKNADIGLAFDGDGDRLIAVDEKGNLVDGDKIMFICAKYMHEIGMLRKDTVVSTVMSNLGFYKALENIGLNSNKTSVGDRYVMEEMRQNGYNLGGEQSGHIIFLDYITTGDGMLSAIQLVNVMRETGKPLSELADEMVVFPQVLKNVRVMDKNQALSSSVLLDEVDAVEKELGEDGRVLVRPSGTEPLVRVMVEAKTKEECEQYADRIVSVIEQHLGA.

Ser-100 (phosphoserine intermediate) is an active-site residue. Ser-100, Asp-239, Asp-241, and Asp-243 together coordinate Mg(2+). Ser-100 bears the Phosphoserine mark.

This sequence belongs to the phosphohexose mutase family. Mg(2+) serves as cofactor. Activated by phosphorylation.

It carries out the reaction alpha-D-glucosamine 1-phosphate = D-glucosamine 6-phosphate. Its function is as follows. Catalyzes the conversion of glucosamine-6-phosphate to glucosamine-1-phosphate. The polypeptide is Phosphoglucosamine mutase (Oceanobacillus iheyensis (strain DSM 14371 / CIP 107618 / JCM 11309 / KCTC 3954 / HTE831)).